Consider the following 413-residue polypeptide: Tyrosine--tRNA ligase (413 aa).

The 'HIGH' region signature appears at 59 to 68; sequence PTAPDIHIGH. A 'KMSKS' region motif is present at residues 243 to 247; that stretch reads KMSKS. Lys-246 provides a ligand contact to ATP. One can recognise an S4 RNA-binding domain in the interval 351-411; the sequence is LAIGQLLKQA…GKRRFARVTL (61 aa).

The protein belongs to the class-I aminoacyl-tRNA synthetase family. TyrS type 2 subfamily. As to quaternary structure, homodimer.

It localises to the cytoplasm. The catalysed reaction is tRNA(Tyr) + L-tyrosine + ATP = L-tyrosyl-tRNA(Tyr) + AMP + diphosphate + H(+). Its function is as follows. Catalyzes the attachment of tyrosine to tRNA(Tyr) in a two-step reaction: tyrosine is first activated by ATP to form Tyr-AMP and then transferred to the acceptor end of tRNA(Tyr). This Burkholderia lata (strain ATCC 17760 / DSM 23089 / LMG 22485 / NCIMB 9086 / R18194 / 383) protein is Tyrosine--tRNA ligase.